Here is a 553-residue protein sequence, read N- to C-terminus: Putative transport protein YidE (553 aa).

5 helical membrane-spanning segments follow: residues 4–24 (IALTVSILALVAVVGLFIGNV), 28–48 (GIGLGIGGVLFGGIIVGHFVS), 65–85 (FGLILFVYTIGIQVGPGFFAS), 95–115 (LFAVLIVIIGGLVTAILHKLF), and 158–178 (MSYAMAYPFGICGILFTMWML). RCK C-terminal domains lie at 191-276 (QQHE…VIGQ) and 279-361 (DTSL…VLGN). 6 helical membrane passes run 371–391 (MLPVFIGIGLGVLLGSIPVFV), 393–413 (GFPAALKLGLAGGPLIMALIL), 439–459 (IVLFLSVVGLKSGGDFVNTLV), 464–484 (LSWIGYGALITAVPLITVGIL), 493–513 (YLTMCGMLAGSMTDPPALAFA), and 533–553 (LVMFLRIITPQLLAVLFWSIG).

This sequence belongs to the AAE transporter (TC 2.A.81) family. YidE subfamily.

It localises to the cell membrane. The polypeptide is Putative transport protein YidE (Escherichia coli O7:K1 (strain IAI39 / ExPEC)).